Consider the following 655-residue polypeptide: Very long-chain specific acyl-CoA dehydrogenase, mitochondrial (655 aa).

The transit peptide at 1 to 40 (MQSARMTPSVGRQLLRLGARSSRSAALQGQPRPTSAQRLY) directs the protein to the mitochondrion. Residues 1-70 (MQSARMTPSV…TREKPARAES (70 aa)) are disordered. Over residues 21–37 (SSRSAALQGQPRPTSAQ) the composition is skewed to polar residues. The catalytic stretch occupies residues 41–482 (ASEATQAVLE…ALQGCMDKGK (442 aa)). The residue at position 51 (Lys-51) is an N6-acetyllysine. A compositionally biased stretch (basic and acidic residues) spans 60 to 70 (STREKPARAES). N6-acetyllysine; alternate occurs at positions 71 and 127. N6-succinyllysine; alternate occurs at positions 71 and 127. Lys-195 carries the post-translational modification N6-succinyllysine. 214–223 (FCLTEPSSGS) contacts FAD. An S-nitrosocysteine modification is found at Cys-237. Lys-239 bears the N6-acetyllysine; alternate mark. An N6-succinyllysine; alternate modification is found at Lys-239. Residue 249-251 (WIS) participates in FAD binding. N6-succinyllysine is present on Lys-268. Residues Lys-276 and Lys-278 each carry the N6-acetyllysine; alternate modification. Lys-276 and Lys-278 each carry N6-succinyllysine; alternate. N6-acetyllysine occurs at positions 298 and 316. Lys-331 is subject to N6-acetyllysine; alternate. Lys-331 carries the post-translational modification N6-succinyllysine; alternate. Lys-372 is modified (N6-succinyllysine). 461–463 (FEG) provides a ligand contact to substrate. Glu-462 functions as the Proton acceptor in the catalytic mechanism. 464–466 (TND) is a binding site for FAD. N6-acetyllysine; alternate is present on Lys-482. At Lys-482 the chain carries N6-succinyllysine; alternate. Positions 483–516 (ELTGLGNALKNPLGNVGLLIGEASKQLRRRTGIG) are membrane-anchoring. 2 positions are modified to phosphoserine: Ser-517 and Ser-522. Lys-550 carries the N6-acetyllysine modification. The residue at position 556 (Lys-556) is an N6-acetyllysine; alternate. N6-succinyllysine; alternate is present on Lys-556. Gln-562 serves as a coordination point for FAD. Lys-639 carries the N6-succinyllysine modification.

It belongs to the acyl-CoA dehydrogenase family. Homodimer. Homodimerizes after import into the mitochondrion. It depends on FAD as a cofactor. Post-translationally, S-nitrosylation at Cys-237 in liver improves catalytic efficiency. In terms of tissue distribution, widely expressed (at protein level).

The protein localises to the mitochondrion inner membrane. It carries out the reaction a very-long-chain 2,3-saturated fatty acyl-CoA + oxidized [electron-transfer flavoprotein] + H(+) = a very-long-chain (2E)-enoyl-CoA + reduced [electron-transfer flavoprotein]. The enzyme catalyses dodecanoyl-CoA + oxidized [electron-transfer flavoprotein] + H(+) = (2E)-dodecenoyl-CoA + reduced [electron-transfer flavoprotein]. It catalyses the reaction tetradecanoyl-CoA + oxidized [electron-transfer flavoprotein] + H(+) = (2E)-tetradecenoyl-CoA + reduced [electron-transfer flavoprotein]. The catalysed reaction is oxidized [electron-transfer flavoprotein] + hexadecanoyl-CoA + H(+) = (2E)-hexadecenoyl-CoA + reduced [electron-transfer flavoprotein]. It carries out the reaction octadecanoyl-CoA + oxidized [electron-transfer flavoprotein] + H(+) = (2E)-octadecenoyl-CoA + reduced [electron-transfer flavoprotein]. The enzyme catalyses eicosanoyl-CoA + oxidized [electron-transfer flavoprotein] + H(+) = (2E)-eicosenoyl-CoA + reduced [electron-transfer flavoprotein]. It catalyses the reaction docosanoyl-CoA + oxidized [electron-transfer flavoprotein] + H(+) = (2E)-docosenoyl-CoA + reduced [electron-transfer flavoprotein]. The catalysed reaction is tetracosanoyl-CoA + oxidized [electron-transfer flavoprotein] + H(+) = (2E)-tetracosenoyl-CoA + reduced [electron-transfer flavoprotein]. Its pathway is lipid metabolism; mitochondrial fatty acid beta-oxidation. Very long-chain specific acyl-CoA dehydrogenase is one of the acyl-CoA dehydrogenases that catalyze the first step of mitochondrial fatty acid beta-oxidation, an aerobic process breaking down fatty acids into acetyl-CoA and allowing the production of energy from fats. The first step of fatty acid beta-oxidation consists in the removal of one hydrogen from C-2 and C-3 of the straight-chain fatty acyl-CoA thioester, resulting in the formation of trans-2-enoyl-CoA. Among the different mitochondrial acyl-CoA dehydrogenases, very long-chain specific acyl-CoA dehydrogenase acts specifically on acyl-CoAs with saturated 12 to 24 carbons long primary chains. In Rattus norvegicus (Rat), this protein is Very long-chain specific acyl-CoA dehydrogenase, mitochondrial.